Reading from the N-terminus, the 102-residue chain is uncharacterized protein (102 aa).

This is an uncharacterized protein from Schizosaccharomyces pombe (strain 972 / ATCC 24843) (Fission yeast).